Here is a 77-residue protein sequence, read N- to C-terminus: U10-lycotoxin-Ls1b (77 aa).

Positions Met1–Ala20 are cleaved as a signal peptide. Residues Glu21–Arg26 constitute a propeptide that is removed on maturation.

This sequence belongs to the neurotoxin 19 (CSTX) family. 09 (U10-Lctx) subfamily. Post-translationally, contains 4 disulfide bonds. As to expression, expressed by the venom gland.

The protein resides in the secreted. The polypeptide is U10-lycotoxin-Ls1b (Lycosa singoriensis (Wolf spider)).